A 380-amino-acid polypeptide reads, in one-letter code: Lipid-A-disaccharide synthase (380 aa).

This sequence belongs to the LpxB family.

The catalysed reaction is a lipid X + a UDP-2-N,3-O-bis[(3R)-3-hydroxyacyl]-alpha-D-glucosamine = a lipid A disaccharide + UDP + H(+). The protein operates within bacterial outer membrane biogenesis; LPS lipid A biosynthesis. Functionally, condensation of UDP-2,3-diacylglucosamine and 2,3-diacylglucosamine-1-phosphate to form lipid A disaccharide, a precursor of lipid A, a phosphorylated glycolipid that anchors the lipopolysaccharide to the outer membrane of the cell. This is Lipid-A-disaccharide synthase from Pseudomonas syringae pv. tomato (strain ATCC BAA-871 / DC3000).